Reading from the N-terminus, the 125-residue chain is MYSGICSCLFLAVLSSSSLGQQISGSQHANPAVTDLEQSLLENHRHTRIPTSGRPIQLVDGSIDQKANLGALLAKYLQQARRGSTGKASVMGLQNFDPTHRIKDRDYMGWMDFGRRSAEEYEYSS.

An N-terminal signal peptide occupies residues 1 to 20; sequence MYSGICSCLFLAVLSSSSLG. A propeptide spanning residues 21-105 is cleaved from the precursor; the sequence is QQISGSQHAN…FDPTHRIKDR (85 aa). Tyr107 is modified (sulfotyrosine). Phe113 is subject to Phenylalanine amide. Positions 114 to 125 are excised as a propeptide; sequence GRRSAEEYEYSS.

Belongs to the gastrin/cholecystokinin family.

It is found in the secreted. Hypotensive neuropeptide that binds cholecystokinin receptors (CCKAR). The protein is Cholecystokinin-8 (CCK) of Python molurus (Indian python).